Reading from the N-terminus, the 137-residue chain is Small ribosomal subunit protein uS9 (137 aa).

The protein belongs to the universal ribosomal protein uS9 family.

This Picosynechococcus sp. (strain ATCC 27264 / PCC 7002 / PR-6) (Agmenellum quadruplicatum) protein is Small ribosomal subunit protein uS9.